The primary structure comprises 257 residues: Imidazole glycerol phosphate synthase subunit HisF (257 aa).

Residues aspartate 11 and aspartate 130 contribute to the active site.

Belongs to the HisA/HisF family. In terms of assembly, heterodimer of HisH and HisF.

It localises to the cytoplasm. It carries out the reaction 5-[(5-phospho-1-deoxy-D-ribulos-1-ylimino)methylamino]-1-(5-phospho-beta-D-ribosyl)imidazole-4-carboxamide + L-glutamine = D-erythro-1-(imidazol-4-yl)glycerol 3-phosphate + 5-amino-1-(5-phospho-beta-D-ribosyl)imidazole-4-carboxamide + L-glutamate + H(+). It participates in amino-acid biosynthesis; L-histidine biosynthesis; L-histidine from 5-phospho-alpha-D-ribose 1-diphosphate: step 5/9. Functionally, IGPS catalyzes the conversion of PRFAR and glutamine to IGP, AICAR and glutamate. The HisF subunit catalyzes the cyclization activity that produces IGP and AICAR from PRFAR using the ammonia provided by the HisH subunit. The chain is Imidazole glycerol phosphate synthase subunit HisF from Shewanella sp. (strain W3-18-1).